We begin with the raw amino-acid sequence, 296 residues long: Enoyl-CoA hydratase domain-containing protein 2, mitochondrial (296 aa).

The transit peptide at 1-17 (MLRVLPRALRLPCSWRF) directs the protein to the mitochondrion. Lys-101 bears the N6-acetyllysine; alternate mark. Lys-101 is modified (N6-succinyllysine; alternate).

The protein belongs to the enoyl-CoA hydratase/isomerase family.

Its subcellular location is the mitochondrion. This Mus musculus (Mouse) protein is Enoyl-CoA hydratase domain-containing protein 2, mitochondrial (Echdc2).